Reading from the N-terminus, the 331-residue chain is Probable deacetylase MTH_1194 (331 aa).

Histidine 118 acts as the Proton donor/acceptor in catalysis. 3 residues coordinate Zn(2+): aspartate 155, histidine 157, and aspartate 244.

It belongs to the histone deacetylase family. It depends on Zn(2+) as a cofactor.

Its function is as follows. Probable deacetylase. This is Probable deacetylase MTH_1194 from Methanothermobacter thermautotrophicus (strain ATCC 29096 / DSM 1053 / JCM 10044 / NBRC 100330 / Delta H) (Methanobacterium thermoautotrophicum).